Reading from the N-terminus, the 472-residue chain is 2-oxoisovalerate dehydrogenase subunit alpha 2, mitochondrial (472 aa).

185 to 187 (QYR) serves as a coordination point for thiamine diphosphate. K(+)-binding residues include Ser234, Thr239, and Gln240.

The protein belongs to the BCKDHA family. As to quaternary structure, heterotetramer of alpha and beta chains. Thiamine diphosphate is required as a cofactor.

It is found in the mitochondrion matrix. It catalyses the reaction N(6)-[(R)-lipoyl]-L-lysyl-[protein] + 3-methyl-2-oxobutanoate + H(+) = N(6)-[(R)-S(8)-2-methylpropanoyldihydrolipoyl]-L-lysyl-[protein] + CO2. Functionally, the branched-chain alpha-keto dehydrogenase complex catalyzes the overall conversion of alpha-keto acids to acyl-CoA and CO(2). It contains multiple copies of three enzymatic components: branched-chain alpha-keto acid decarboxylase (E1), lipoamide acyltransferase (E2) and lipoamide dehydrogenase (E3). The protein is 2-oxoisovalerate dehydrogenase subunit alpha 2, mitochondrial of Arabidopsis thaliana (Mouse-ear cress).